A 134-amino-acid chain; its full sequence is Large ribosomal subunit protein eL32 (134 aa).

This sequence belongs to the eukaryotic ribosomal protein eL32 family.

In Drosophila bifasciata (Fruit fly), this protein is Large ribosomal subunit protein eL32 (RpL32).